Here is a 449-residue protein sequence, read N- to C-terminus: Metacaspase-1 (449 aa).

Positions 1-132 (MFPGQGRHTY…YSRPPTNQQS (132 aa)) are disordered. Residues 10–26 (YGGQQQLLQLQQYNYGP) are compositionally biased toward low complexity. A compositionally biased stretch (pro residues) spans 27-55 (PQGPPPNGYGPPPGPPPNGYGPPPGPPPQ). Residues 56–66 (NSWGYGNPSGT) are compositionally biased toward polar residues. Low complexity-rich tracts occupy residues 67 to 91 (QSSN…YQRP) and 98 to 112 (QSGN…NGEP). Residues 119–132 (GSGQYSRPPTNQQS) are compositionally biased toward polar residues. Active-site residues include histidine 232 and cysteine 293.

The protein belongs to the peptidase C14B family.

Involved in cell death (apoptosis). The polypeptide is Metacaspase-1 (MCA1) (Lodderomyces elongisporus (strain ATCC 11503 / CBS 2605 / JCM 1781 / NBRC 1676 / NRRL YB-4239) (Yeast)).